The chain runs to 550 residues: Chaperonin GroEL (550 aa).

ATP contacts are provided by residues 30–33, K51, 87–91, G415, and D495; these read TLGP and DGTTT.

This sequence belongs to the chaperonin (HSP60) family. As to quaternary structure, forms a cylinder of 14 subunits composed of two heptameric rings stacked back-to-back. Interacts with the co-chaperonin GroES.

It is found in the cytoplasm. The enzyme catalyses ATP + H2O + a folded polypeptide = ADP + phosphate + an unfolded polypeptide.. Functionally, together with its co-chaperonin GroES, plays an essential role in assisting protein folding. The GroEL-GroES system forms a nano-cage that allows encapsulation of the non-native substrate proteins and provides a physical environment optimized to promote and accelerate protein folding. In Shewanella piezotolerans (strain WP3 / JCM 13877), this protein is Chaperonin GroEL.